The sequence spans 187 residues: ATP synthase subunit b 2 (187 aa).

A helical transmembrane segment spans residues 39 to 61; sequence SQLVWLVLSFAALYLLMSRVALP.

It belongs to the ATPase B chain family. As to quaternary structure, F-type ATPases have 2 components, F(1) - the catalytic core - and F(0) - the membrane proton channel. F(1) has five subunits: alpha(3), beta(3), gamma(1), delta(1), epsilon(1). F(0) has three main subunits: a(1), b(2) and c(10-14). The alpha and beta chains form an alternating ring which encloses part of the gamma chain. F(1) is attached to F(0) by a central stalk formed by the gamma and epsilon chains, while a peripheral stalk is formed by the delta and b chains.

Its subcellular location is the cell inner membrane. F(1)F(0) ATP synthase produces ATP from ADP in the presence of a proton or sodium gradient. F-type ATPases consist of two structural domains, F(1) containing the extramembraneous catalytic core and F(0) containing the membrane proton channel, linked together by a central stalk and a peripheral stalk. During catalysis, ATP synthesis in the catalytic domain of F(1) is coupled via a rotary mechanism of the central stalk subunits to proton translocation. Its function is as follows. Component of the F(0) channel, it forms part of the peripheral stalk, linking F(1) to F(0). This is ATP synthase subunit b 2 from Parvibaculum lavamentivorans (strain DS-1 / DSM 13023 / NCIMB 13966).